Reading from the N-terminus, the 139-residue chain is Nuclear receptor 2C2-associated protein (139 aa).

The protein belongs to the NR2C2AP family. As to quaternary structure, interacts with NR2C2/TR4. In terms of tissue distribution, expressed in all tissues examined, with highest expression in heart, skeletal muscle and pancreas.

It is found in the nucleus. In terms of biological role, may act as a repressor of NR2C2-mediated transactivation by suppressing the binding between NR2C2/TR4 and the TR4-response element in target genes. The chain is Nuclear receptor 2C2-associated protein (NR2C2AP) from Homo sapiens (Human).